Consider the following 97-residue polypeptide: Probable lipopolysaccharide assembly protein A (97 aa).

2 consecutive transmembrane segments (helical) span residues 1-21 and 46-66; these read MIKY…AITI and VAIL…FFYI. The stretch at 67–95 forms a coiled coil; sequence KLKLKNMALARQVKRQTLQINELTTTRDK.

Belongs to the LapA family.

The protein localises to the cell inner membrane. Functionally, involved in the assembly of lipopolysaccharide (LPS). The sequence is that of Probable lipopolysaccharide assembly protein A from Haemophilus influenzae (strain ATCC 51907 / DSM 11121 / KW20 / Rd).